The sequence spans 267 residues: Apolipoprotein A-I (267 aa).

The first 18 residues, 1 to 18, serve as a signal peptide directing secretion; the sequence is MKAAVLTLAVLFLTGSQA. 2 tandem repeats follow at residues 68–89 and 90–111. Residues 68-267 form a 10 X approximate tandem repeats region; sequence LKLLDNWDSL…EEYAKKLSSQ (200 aa). Met-110 carries the methionine sulfoxide modification. The 3; half-length repeat unit spans residues 112 to 122; sequence KDLEEVKAKVQ. 5 tandem repeats follow at residues 123–144, 145–166, 167–188, 189–210, and 211–232. One copy of the 9; half-length repeat lies at 233-243; sequence PALEDLRQGLL. The stretch at 244 to 267 is repeat 10; the sequence is PVLESFKVSFLSALEEYAKKLSSQ.

The protein belongs to the apolipoprotein A1/A4/E family. Homodimer. Interacts with APOA1BP and CLU. Component of a sperm activating protein complex (SPAP), consisting of APOA1, an immunoglobulin heavy chain, an immunoglobulin light chain and albumin. Interacts with NDRG1. Interacts with SCGB3A2. Interacts with NAXE and YJEFN3. Glycosylated. In terms of processing, palmitoylated. Post-translationally, phosphorylation sites are present in the extracellular medium.

It is found in the secreted. Functionally, participates in the reverse transport of cholesterol from tissues to the liver for excretion by promoting cholesterol efflux from tissues and by acting as a cofactor for the lecithin cholesterol acyltransferase (LCAT). As part of the SPAP complex, activates spermatozoa motility. The chain is Apolipoprotein A-I (APOA1) from Cebus imitator (Panamanian white-faced capuchin).